Consider the following 1085-residue polypeptide: RecBCD enzyme subunit RecC (1085 aa).

It belongs to the RecC family. In terms of assembly, heterotrimer of RecB, RecC and RecD. All subunits contribute to DNA-binding.

Its function is as follows. A helicase/nuclease that prepares dsDNA breaks (DSB) for recombinational DNA repair. Binds to DSBs and unwinds DNA via a highly rapid and processive ATP-dependent bidirectional helicase activity. Holoenzyme degrades any linearized DNA that is unable to undergo homologous recombination. In the holoenzyme this subunit recognizes the wild-type Chi sequence, and when added to isolated RecB increases its ATP-dependent helicase processivity. Unlike the case in E.coli, suppresses RecA-dependent homologous recombination, is instead required for single-strand annealing pathway repair of DSB. The polypeptide is RecBCD enzyme subunit RecC (Mycolicibacterium smegmatis (strain ATCC 700084 / mc(2)155) (Mycobacterium smegmatis)).